The primary structure comprises 455 residues: Exodeoxyribonuclease 7 large subunit (455 aa).

This sequence belongs to the XseA family. As to quaternary structure, heterooligomer composed of large and small subunits.

The protein resides in the cytoplasm. The catalysed reaction is Exonucleolytic cleavage in either 5'- to 3'- or 3'- to 5'-direction to yield nucleoside 5'-phosphates.. Bidirectionally degrades single-stranded DNA into large acid-insoluble oligonucleotides, which are then degraded further into small acid-soluble oligonucleotides. The polypeptide is Exodeoxyribonuclease 7 large subunit (Lactobacillus acidophilus (strain ATCC 700396 / NCK56 / N2 / NCFM)).